The primary structure comprises 317 residues: Melanocyte-stimulating hormone receptor (317 aa).

The Extracellular segment spans residues 1 to 37; it reads MPMQGAQRRLLGSLNSTPTATPNLGLAANHTGAPCLE. An N-linked (GlcNAc...) asparagine glycan is attached at Asn29. The chain crosses the membrane as a helical span at residues 38–63; sequence VSIPDGLFLSLGLVSLVENVLVVAAI. Topologically, residues 64-72 are cytoplasmic; sequence AKNRNLHSP. The helical transmembrane segment at 73–93 threads the bilayer; it reads MYCFICCLALSDLLVSGSNML. Residues 94–118 lie on the Extracellular side of the membrane; it reads EMAVILLLEAGALATRASVVQQLQN. A helical membrane pass occupies residues 119–140; that stretch reads TIDVLTCSSMLCSLCFLGAIAV. The Cytoplasmic segment spans residues 141–163; sequence DRYVSIFYALRYHSIVTLPRARR. The chain crosses the membrane as a helical span at residues 164–183; the sequence is AIAAIWVASVLSSTLFIAYC. Residues 184-191 lie on the Extracellular side of the membrane; that stretch reads DHAAVLLC. The helical transmembrane segment at 192–211 threads the bilayer; sequence LVVFFLAMLVLMAVLYVHML. Residues 212–240 lie on the Cytoplasmic side of the membrane; that stretch reads ARACQHAQGITRLHKRQLPAHQGFGLRGA. The helical transmembrane segment at 241–266 threads the bilayer; sequence ATLTILLGIFFLCWGPFFLHLMLVVL. The Extracellular portion of the chain corresponds to 267 to 279; that stretch reads CPQHLTCSCIFKN. The helical transmembrane segment at 280–300 threads the bilayer; the sequence is FKVFLTLIICNTIIDPLIYAF. At 301–317 the chain is on the cytoplasmic side; the sequence is RSQELCRTLREVLLCSW. Cys315 carries the S-palmitoyl cysteine lipid modification.

This sequence belongs to the G-protein coupled receptor 1 family. As to quaternary structure, interacts with MGRN1, but does not undergo MGRN1-mediated ubiquitination; this interaction competes with GNAS-binding and thus inhibits agonist-induced cAMP production. Interacts with OPN3; the interaction results in a decrease in MC1R-mediated cAMP signaling and ultimately a decrease in melanin production in melanocytes.

The protein localises to the cell membrane. In terms of biological role, receptor for MSH (alpha, beta and gamma) and ACTH. The activity of this receptor is mediated by G proteins which activate adenylate cyclase. Mediates melanogenesis, the production of eumelanin (black/brown) and phaeomelanin (red/yellow), via regulation of cAMP signaling in melanocytes. The chain is Melanocyte-stimulating hormone receptor (MC1R) from Alouatta pigra (Guatemalan howler monkey).